An 812-amino-acid polypeptide reads, in one-letter code: ISWI one complex protein 2 (812 aa).

4 disordered regions span residues 1-21, 614-646, 679-704, and 762-812; these read MRTKRTRGTRNVGASMPAGAA, MGNSHGNRRSSRRPQSTLEPSTKSSRPTDKRKP, AKQRKQQEDRERRKKMKEEKKRLEEL, and QTGS…PPTN. The segment covering 627–638 has biased composition (polar residues); sequence PQSTLEPSTKSS. Residues 673–714 adopt a coiled-coil conformation; the sequence is ELKIIRAKQRKQQEDRERRKKMKEEKKRLEELAKKRELTESV. Residues 683–704 show a composition bias toward basic and acidic residues; the sequence is KQQEDRERRKKMKEEKKRLEEL. A compositionally biased stretch (low complexity) spans 769 to 796; the sequence is PQAPQAPQTSQASIQPQQQQQQQQQQQP.

In terms of assembly, component of the ISW1B complex, which at least consists of ISW1, IOC2 and IOC4.

It is found in the nucleus. Its function is as follows. Functions as a component of the ISW1B complex, which acts in remodeling the chromatin by catalyzing an ATP-dependent alteration in the structure of nucleosomal DNA. The ISW1B complex acts within coding regions to control the amount of RNA polymerase II released into productive elongation and to coordinate elongation with termination and pre-mRNA processing. The polypeptide is ISWI one complex protein 2 (IOC2) (Saccharomyces cerevisiae (strain ATCC 204508 / S288c) (Baker's yeast)).